The sequence spans 291 residues: START domain-containing protein 10 (291 aa).

Residue Met-1 is modified to N-acetylmethionine. The disordered stretch occupies residues 1-23 (MEKPAASTEPQGSRPALGRESVQ). Residues 14–224 (RPALGRESVQ…MYKACIKYPE (211 aa)) form the START domain. 3 positions are modified to N6-succinyllysine: Lys-94, Lys-197, and Lys-202. Phosphoserine is present on residues Ser-253, Ser-259, Ser-284, and Ser-289. A disordered region spans residues 260–291 (LENIDESAVTESREERAGGAGGEGSDDDTSLT).

In terms of processing, phosphorylation at Ser-284 by CK2 negatively regulates lipid transfer activity, possibly by decreasing membrane association. As to expression, testis, kidney, liver, and intestine with the highest level in the testis.

Its subcellular location is the cell projection. The protein resides in the cilium. It localises to the flagellum. It is found in the cytoplasm. The protein localises to the membrane. Phospholipid transfer protein that preferentially selects lipid species containing a palmitoyl or stearoyl chain on the sn-1 and an unsaturated fatty acyl chain (18:1 or 18:2) on the sn-2 position. Able to transfer phosphatidylcholine (PC) and phosphatidyetanolamline (PE) between membranes. May play metabolic roles in sperm maturation or fertilization. This is START domain-containing protein 10 (Stard10) from Mus musculus (Mouse).